The primary structure comprises 278 residues: Octanoyltransferase LipM (278 aa).

The 216-residue stretch at 33–248 (KKMPPTIRFY…GFEKGLDVEL (216 aa)) folds into the BPL/LPL catalytic domain. Residue cysteine 150 is the Acyl-thioester intermediate of the active site.

It belongs to the octanoyltransferase LipM family. As to quaternary structure, monomer.

It catalyses the reaction octanoyl-[ACP] + L-lysyl-[protein] = N(6)-octanoyl-L-lysyl-[protein] + holo-[ACP] + H(+). It functions in the pathway protein modification; protein lipoylation via endogenous pathway; protein N(6)-(lipoyl)lysine from octanoyl-[acyl-carrier-protein]. In terms of biological role, catalyzes the transfer of endogenously produced octanoic acid from octanoyl-acyl-carrier-protein onto the lipoyl domain of GcvH, an intermediate carrier during protein lipoylation. The protein is Octanoyltransferase LipM of Bacillus anthracis.